The following is a 318-amino-acid chain: Methionyl-tRNA formyltransferase (318 aa).

112-115 is a binding site for (6S)-5,6,7,8-tetrahydrofolate; sequence SILP.

Belongs to the Fmt family.

The catalysed reaction is L-methionyl-tRNA(fMet) + (6R)-10-formyltetrahydrofolate = N-formyl-L-methionyl-tRNA(fMet) + (6S)-5,6,7,8-tetrahydrofolate + H(+). Attaches a formyl group to the free amino group of methionyl-tRNA(fMet). The formyl group appears to play a dual role in the initiator identity of N-formylmethionyl-tRNA by promoting its recognition by IF2 and preventing the misappropriation of this tRNA by the elongation apparatus. The sequence is that of Methionyl-tRNA formyltransferase from Shewanella baltica (strain OS195).